Consider the following 216-residue polypeptide: MAAPPARARADYDYLIKLLLIGDSGVGKSCLLLRFSDGSFTTSFITTIGIDFKIRTIELDGKRIKLQIWDTAGQERFRTITTAYYRGAMGILLVYDVTDESSFNNIRNWIRNIEQHASDSVNKILVGNKADMDESKRAVPKSKGQALADEYGMKFFETSAKTNLNVEEVFFSIAKDIKQRLADTDARAEPQTIKINQSDQGAGTSQATQKSACCGT.

22 to 29 (GDSGVGKS) lines the GTP pocket. An Effector region motif is present at residues 44-52 (FITTIGIDF). GTP is bound by residues 70–74 (DTAGQ), 128–131 (NKAD), and 159–160 (SA). The tract at residues 185–216 (DARAEPQTIKINQSDQGAGTSQATQKSACCGT) is disordered. Polar residues predominate over residues 193 to 216 (IKINQSDQGAGTSQATQKSACCGT). 2 S-geranylgeranyl cysteine lipidation sites follow: cysteine 213 and cysteine 214.

The protein belongs to the small GTPase superfamily. Rab family. In terms of assembly, interacts with PI5K2.

The protein resides in the golgi apparatus membrane. Its subcellular location is the cell membrane. Its function is as follows. Involved in membrane trafficking from the Golgi to the plasma membrane. This chain is Ras-related protein RABE1a (RABE1A), found in Arabidopsis thaliana (Mouse-ear cress).